The sequence spans 282 residues: Proteasome subunit beta (282 aa).

Residues 1–55 (MDNSSTGRYPAASLPPAYLRPGSSSFTDFLRAQAPELLPTARSFPEGSVVQAAHG) constitute a propeptide, removed in mature form; by autocatalysis. The active-site Nucleophile is the Thr56.

Belongs to the peptidase T1B family. In terms of assembly, the 20S proteasome core is composed of 14 alpha and 14 beta subunits that assemble into four stacked heptameric rings, resulting in a barrel-shaped structure. The two inner rings, each composed of seven catalytic beta subunits, are sandwiched by two outer rings, each composed of seven alpha subunits. The catalytic chamber with the active sites is on the inside of the barrel. Has a gated structure, the ends of the cylinder being occluded by the N-termini of the alpha-subunits. Is capped by the proteasome-associated ATPase, ARC.

It localises to the cytoplasm. The enzyme catalyses Cleavage of peptide bonds with very broad specificity.. It functions in the pathway protein degradation; proteasomal Pup-dependent pathway. The formation of the proteasomal ATPase ARC-20S proteasome complex, likely via the docking of the C-termini of ARC into the intersubunit pockets in the alpha-rings, may trigger opening of the gate for substrate entry. Interconversion between the open-gate and close-gate conformations leads to a dynamic regulation of the 20S proteasome proteolysis activity. Its function is as follows. Component of the proteasome core, a large protease complex with broad specificity involved in protein degradation. The polypeptide is Proteasome subunit beta (Actinosynnema mirum (strain ATCC 29888 / DSM 43827 / JCM 3225 / NBRC 14064 / NCIMB 13271 / NRRL B-12336 / IMRU 3971 / 101)).